A 642-amino-acid polypeptide reads, in one-letter code: Transcription factor 4 (642 aa).

Over residues 1 to 25 (MFSPPVSSGKNGPTSLASGHFTGSN) the composition is skewed to polar residues. The interval 1-59 (MFSPPVSSGKNGPTSLASGHFTGSNVEDRSSSGSWGNGGHPSPSRNYGDGTPYDHMTSR) is essential for MYOD1 inhibition. Disordered stretches follow at residues 1 to 296 (MFSP…SQTG), 311 to 354 (HTNN…EGPL), 444 to 545 (PNQV…MANN), and 609 to 642 (KRREEEKVSSEPPPLSLAGPHPGMGDASNHMGQM). Residues S42, S63, and S68 each carry the phosphoserine modification. 5 stretches are compositionally biased toward polar residues: residues 83 to 98 (GSYSSYGRESNLQGCH), 112 to 130 (GTLSPTKPGSQYYQYSSNN), 181 to 191 (PAASTFPSSFF), 218 to 230 (GSSSHIPQSSSYC), and 241 to 281 (PSHS…TDSI). A compositionally biased stretch (low complexity) spans 312–323 (TNNSFSSNPSTP). The segment covering 340-349 (NGGQASSSPN) has biased composition (polar residues). The residue at position 347 (S347) is a Phosphoserine. The interval 354–375 (LHSLQSRIEDRLERLDDAIHVL) is leucine-zipper. Low complexity-rich tracts occupy residues 444–455 (PNQVPVPQLPVQ) and 478–487 (GQSVSSGSSE). S490 is modified (phosphoserine). 2 stretches are compositionally biased toward basic and acidic residues: residues 502–517 (KSSEDKKLDDDKKDIK) and 530–545 (PEQKAEREKERRMANN). The region spanning 539–592 (ERRMANNARERLRVRDINEAFKELGRMVQLHLKSDKPQTKLLILHQAVAVILSL) is the bHLH domain. Residues 594–617 (QQVRERNLNPKAACLKRREEEKVS) form a class A specific domain region.

As to quaternary structure, efficient DNA binding requires dimerization with another bHLH protein. Forms homo- or heterooligomers with myogenin. Interacts with HIVEP2. Interacts with NEUROD2. Interacts with AGBL1. Widely expressed.

The protein localises to the nucleus. In terms of biological role, transcription factor that binds to the immunoglobulin enhancer Mu-E5/KE5-motif. Involved in the initiation of neuronal differentiation. Activates transcription by binding to the E box (5'-CANNTG-3'). Binds to the thyroglobulin promoter. The polypeptide is Transcription factor 4 (TCF4) (Canis lupus familiaris (Dog)).